The following is a 220-amino-acid chain: Protein LURP-one-related 12 (220 aa).

The protein belongs to the LOR family.

Its function is as follows. Might be related to the phospholipid scramblase and tubby-like superfamily of membrane tethered transcription factors. The polypeptide is Protein LURP-one-related 12 (Arabidopsis thaliana (Mouse-ear cress)).